Here is a 425-residue protein sequence, read N- to C-terminus: Histone-binding protein RBBP4 (425 aa).

Alanine 2 carries the N-acetylalanine modification. Lysine 4 carries the post-translational modification N6-acetyllysine; alternate. Residue lysine 4 forms a Glycyl lysine isopeptide (Lys-Gly) (interchain with G-Cter in SUMO2); alternate linkage. Lysine 4 participates in a covalent cross-link: Glycyl lysine isopeptide (Lys-Gly) (interchain with G-Cter in ubiquitin); alternate. WD repeat units follow at residues 32–125 (YDLV…NHEG), 126–175 (EVNR…RLRG), 176–223 (HQKE…KTIF), 225–270 (GHTA…HSVD), 271–314 (AHTA…HSFE), 315–371 (SHKD…FIHG), and 372–404 (GHTAKISDFSWNPNEPWVICSVSEDNIMQVWQM). Serine 110 is subject to Phosphoserine. N6-acetyllysine; alternate is present on lysine 160. A Glycyl lysine isopeptide (Lys-Gly) (interchain with G-Cter in SUMO2); alternate cross-link involves residue lysine 160. Residue serine 355 is modified to Phosphoserine.

Belongs to the WD repeat RBAP46/RBAP48/MSI1 family. As to quaternary structure, binds directly to helix 1 of the histone fold of histone H4, a region that is not accessible when H4 is in chromatin. Subunit of the chromatin assembly factor 1 (CAF-1) complex, which is composed of RBBP4, CHAF1B and CHAF1A. Subunit of the core histone deacetylase (HDAC) complex, which is composed of HDAC1, HDAC2, RBBP4 and RBBP7. The core HDAC complex associates with SIN3A, ARID4B/SAP180, SAP18, SAP30, SAP130, SUDS3/SAP45 and possibly ARID4A/RBP1 and ING1 to form the SIN3 HDAC complex. Component of the nucleosome remodeling and deacetylase (NuRD) repressor complex, composed of core proteins MTA1, MTA2, MTA3, RBBP4, RBBP7, HDAC1, HDAC2, MBD2, MBD3, and peripherally associated proteins CDK2AP1, CDK2AP2, GATAD2A, GATAD2B, CHD3, CHD4 and CHD5. The exact stoichiometry of the NuRD complex is unknown, and some subunits such as MBD2 and MBD3, GATAD2A and GATAD2B, and CHD3, CHD4 and CHD5 define mutually exclusive NuRD complexes. Interacts with ZNF512B; the interaction is direct and may play a role in repressing gene expression. The NuRD complex may also interact with MBD3L1 and MBD3L2. Component of the PRC2 complex, which consists of the core subunits EED, EZH1 or EZH2, SUZ12, and RBBP4, and various combinations of accessory subunits including AEBP2, JARID2, PHF19, MTF2 and EPOP. Forms a monomeric PRC2.2 (class 2) complex consisting of at least SUZ12, RBBP4, AEBP2 and JARID2. Forms a dimeric PRC2.1 (class 1, PRC-PCL) complex consisting of at least SUZ12, RBBP4, and PHF19; PHF19 stabilizes the dimeric structure which enhances PRC2 interaction with chromatin. Component of the NURF-1 ISWI chromatin remodeling complex (also called the nucleosome-remodeling factor (NURF) complex) at least composed of SMARCA1 (isoform 2), BPTF, RBBP4 and RBBP7. Within the complex interacts with isoform 2 of SMARCA1. Component of the BPFT-SMARCA1 complex at least composed of SMARCA1 (isoform 1), BPFT, RBBP4 and RBBP7; the complex is catalytically inactive and does not remodel chromatin. Within the complex interacts with isoform 1 of SMARCA1. Interacts with the ISWI chromatin remodeling complex component SMARCA5; the interaction is direct. Interacts with the viral protein-binding domain of the retinoblastoma protein (RB1). Component of the DREAM complex (also named LINC complex) at least composed of E2F4, E2F5, LIN9, LIN37, LIN52, LIN54, MYBL1, MYBL2, RBL1, RBL2, RBBP4, TFDP1 and TFDP2. The complex exists in quiescent cells where it represses cell cycle-dependent genes. It dissociates in S phase when LIN9, LIN37, LIN52 and LIN54 form a subcomplex that binds to MYBL2. Found in a complex composed of at least SINHCAF, SIN3A, HDAC1, SAP30, RBBP4, OGT and TET1. Interacts with ZNF827; the interaction is direct and recruits RBBP4 to telomeres. Interacts with MTA1; the interaction is direct and mutually exclusive with binding histone H4. Interacts with ARMC12 (via ARM domains). Interacts with BRCA1. Interacts with CDK2AP1. Interacts with CREBBP, and this interaction may be enhanced by the binding of phosphorylated CREB1 to CREBBP. Interacts with ERCC6. Interacts with HDAC7. Interacts with PHF6. Interacts with PWWP2B. Interacts with SPEN/MINT. Interacts with SUV39H1.

Its subcellular location is the nucleus. The protein resides in the chromosome. It is found in the telomere. Core histone-binding subunit that may target chromatin assembly factors, chromatin remodeling factors and histone deacetylases to their histone substrates in a manner that is regulated by nucleosomal DNA. Component of the chromatin assembly factor 1 (CAF-1) complex, which is required for chromatin assembly following DNA replication and DNA repair. Component of the core histone deacetylase (HDAC) complex, which promotes histone deacetylation and consequent transcriptional repression. Component of the nucleosome remodeling and histone deacetylase complex (the NuRD complex), which promotes transcriptional repression by histone deacetylation and nucleosome remodeling. Component of the PRC2 complex, which promotes repression of homeotic genes during development. Component of the NURF (nucleosome remodeling factor) complex. The sequence is that of Histone-binding protein RBBP4 (RBBP4) from Pongo abelii (Sumatran orangutan).